A 180-amino-acid polypeptide reads, in one-letter code: Bifunctional protein PyrR (180 aa).

Residues 101–113 carry the PRPP-binding motif; it reads VILVDDVLYTGRT.

The protein belongs to the purine/pyrimidine phosphoribosyltransferase family. PyrR subfamily. As to quaternary structure, homodimer and homohexamer; in equilibrium.

It carries out the reaction UMP + diphosphate = 5-phospho-alpha-D-ribose 1-diphosphate + uracil. Regulates transcriptional attenuation of the pyrimidine nucleotide (pyr) operon by binding in a uridine-dependent manner to specific sites on pyr mRNA. This disrupts an antiterminator hairpin in the RNA and favors formation of a downstream transcription terminator, leading to a reduced expression of downstream genes. In terms of biological role, also displays a weak uracil phosphoribosyltransferase activity which is not physiologically significant. The polypeptide is Bifunctional protein PyrR (Bacillus thuringiensis subsp. konkukian (strain 97-27)).